Here is a 71-residue protein sequence, read N- to C-terminus: MFTLKKSLLLLFFLGTISLSLCEQERDADGDEGEVEEVKRGFLDIIKDTGKEFAVKILNNLKCKLAGGCPP.

Positions Met-1–Cys-22 are cleaved as a signal peptide. Residues Glu-23 to Arg-40 constitute a propeptide that is removed on maturation. An intrachain disulfide couples Cys-63 to Cys-69.

It belongs to the frog skin active peptide (FSAP) family. Brevinin subfamily. In terms of tissue distribution, expressed by the skin glands.

The protein localises to the secreted. It is found in the target cell membrane. In terms of biological role, antibacterial peptide with amphipathic alpha-helical structure that exhibits potent broad-spectrum activity against Gram-positive and -negative bacteria. It is active against Listeria ATCC 54004 (MIC=30 ug/ml), S.aureus ATCC 25923 (MIC=7.8 ug/ml), S.suis 2 CVCC 606 (MIC=31.25 ug/ml), B.subtilis ADB403 (30 ug/ml), K.pneumoniae ATCC 700603 (MIC=60 ug/ml) and P.aeruginosa ATCC 227853 (MIC=30 ug/ml). Does not show activity against Salmonella ATCC 20020 and the fungus Candida albicans. Is also cytotoxic to HeLa cells at high concentrations. In addition, shows a strong antitumor activity but only a little hemolytic activity. Despite the presence of a Gly residue at position 10, this alpha-helical peptide remains relatively rigid, not exhibiting any significant flexibility during the molecular dynamics simulation. The peptide shows a preference for a position parallel to the target membrane that suggests it exerts its antimicrobial activity through a non-pore-forming mechanism of action, such as the carpet model or the interfacial activity model. The protein is Palustrin-Ca of Aquarana catesbeiana (American bullfrog).